The following is an 89-amino-acid chain: Small ribosomal subunit protein uS15 (89 aa).

The protein belongs to the universal ribosomal protein uS15 family. In terms of assembly, part of the 30S ribosomal subunit. Forms a bridge to the 50S subunit in the 70S ribosome, contacting the 23S rRNA.

In terms of biological role, one of the primary rRNA binding proteins, it binds directly to 16S rRNA where it helps nucleate assembly of the platform of the 30S subunit by binding and bridging several RNA helices of the 16S rRNA. Functionally, forms an intersubunit bridge (bridge B4) with the 23S rRNA of the 50S subunit in the ribosome. The polypeptide is Small ribosomal subunit protein uS15 (Rhizobium rhizogenes (strain K84 / ATCC BAA-868) (Agrobacterium radiobacter)).